The following is a 438-amino-acid chain: ATP-dependent RNA helicase SUB2 (438 aa).

Residues 1–19 (MSHEGEEDLLEYSDNEQEI) are compositionally biased toward acidic residues. Residues 1-44 (MSHEGEEDLLEYSDNEQEIQVDNTKATEVAGNGEEAADGKDGDK) form a disordered region. Residues 54–82 (TGFKDFLLKPELSRAIIDCGFEHPSEVQQ) carry the Q motif motif. Residues 85–260 (IPQSIHGTDV…RRFLQNPLEI (176 aa)) enclose the Helicase ATP-binding domain. 98 to 105 (AKSGLGKT) contributes to the ATP binding site. The DECD box signature appears at 207-210 (DECD). In terms of domain architecture, Helicase C-terminal spans 272–433 (GLQQYYIRLE…EFPEEGVDPS (162 aa)).

The protein belongs to the DEAD box helicase family. DECD subfamily.

Its subcellular location is the nucleus. The enzyme catalyses ATP + H2O = ADP + phosphate + H(+). Functionally, ATP-binding RNA helicase involved in transcription elongation and required for the export of mRNA out of the nucleus. SUB2 also plays a role in pre-mRNA splicing and spliceosome assembly. May be involved in rDNA and telomeric silencing, and maintenance of genome integrity. The protein is ATP-dependent RNA helicase SUB2 (SUB2) of Eremothecium gossypii (strain ATCC 10895 / CBS 109.51 / FGSC 9923 / NRRL Y-1056) (Yeast).